We begin with the raw amino-acid sequence, 326 residues long: Thioredoxin reductase (326 aa).

55–62 (EGPEPGGQ) lines the FAD pocket. Cysteines 156 and 159 form a disulfide. An FAD-binding site is contributed by 298-307 (DVSNKLYAQA).

Belongs to the class-II pyridine nucleotide-disulfide oxidoreductase family. As to quaternary structure, homodimer. Requires FAD as cofactor.

The protein resides in the cytoplasm. It catalyses the reaction [thioredoxin]-dithiol + NADP(+) = [thioredoxin]-disulfide + NADPH + H(+). This Borreliella burgdorferi (strain ATCC 35210 / DSM 4680 / CIP 102532 / B31) (Borrelia burgdorferi) protein is Thioredoxin reductase (trxB).